A 157-amino-acid polypeptide reads, in one-letter code: D-aminoacyl-tRNA deacylase (157 aa).

The short motif at 137–138 (GP) is the Gly-cisPro motif, important for rejection of L-amino acids element.

Belongs to the DTD family. Homodimer.

The protein localises to the cytoplasm. The catalysed reaction is glycyl-tRNA(Ala) + H2O = tRNA(Ala) + glycine + H(+). The enzyme catalyses a D-aminoacyl-tRNA + H2O = a tRNA + a D-alpha-amino acid + H(+). An aminoacyl-tRNA editing enzyme that deacylates mischarged D-aminoacyl-tRNAs. Also deacylates mischarged glycyl-tRNA(Ala), protecting cells against glycine mischarging by AlaRS. Acts via tRNA-based rather than protein-based catalysis; rejects L-amino acids rather than detecting D-amino acids in the active site. By recycling D-aminoacyl-tRNA to D-amino acids and free tRNA molecules, this enzyme counteracts the toxicity associated with the formation of D-aminoacyl-tRNA entities in vivo and helps enforce protein L-homochirality. The protein is D-aminoacyl-tRNA deacylase of Cyanothece sp. (strain PCC 7425 / ATCC 29141).